The following is a 481-amino-acid chain: MEKIIDEKKQGNSLVLEPKAKNTRKLFIESYGCAMNFSDSEIVASILSKEGFNTTQNLEEADLVLVNTCSIREKAEQTVRKRLEKYNAVKRINPGMKVGVLGCMAERLKDKFLEEEKIVDLVVGPDAYKDLPNLINEVEEGRDAINVILSKEETYGDISPVRLQSNGVSAFVSITRGCDNMCTFCVVPFTRGRERSRDPQSIVEEVNDLAAKGYKEITLLGQNVDSYLWYGGGLKKDFKNATEIQKATATNFAALLKLVAEAQPKMRIRFSTSNPQDMTLDVIEAMAAYRNICNYIHLPVQSGSDRILKKMNRLHTREEYFTLIDNIKKMIPNCGISHDLITGFPTETEEDHQDTLSLMEYVKYDFGYMFTYSERPGTTAERKLEDDIPEETKKRRLQEIVDLQQKHSKQNTNSVIGTTVEVLIEKESKKSNKHWSGRNERNTVTVFSKENYQIGDFVKVKIHDCTSATLIGEPIGLSDNN.

The MTTase N-terminal domain occupies 24–140 (RKLFIESYGC…LPNLINEVEE (117 aa)). Residues Cys-33, Cys-69, Cys-103, Cys-178, Cys-182, and Cys-185 each coordinate [4Fe-4S] cluster. Residues 164–410 (QSNGVSAFVS…VDLQQKHSKQ (247 aa)) enclose the Radical SAM core domain. One can recognise a TRAM domain in the interval 413 to 476 (NSVIGTTVEV…SATLIGEPIG (64 aa)).

Belongs to the methylthiotransferase family. MiaB subfamily. In terms of assembly, monomer. [4Fe-4S] cluster is required as a cofactor.

It is found in the cytoplasm. It catalyses the reaction N(6)-dimethylallyladenosine(37) in tRNA + (sulfur carrier)-SH + AH2 + 2 S-adenosyl-L-methionine = 2-methylsulfanyl-N(6)-dimethylallyladenosine(37) in tRNA + (sulfur carrier)-H + 5'-deoxyadenosine + L-methionine + A + S-adenosyl-L-homocysteine + 2 H(+). Functionally, catalyzes the methylthiolation of N6-(dimethylallyl)adenosine (i(6)A), leading to the formation of 2-methylthio-N6-(dimethylallyl)adenosine (ms(2)i(6)A) at position 37 in tRNAs that read codons beginning with uridine. The sequence is that of tRNA-2-methylthio-N(6)-dimethylallyladenosine synthase from Christiangramia forsetii (strain DSM 17595 / CGMCC 1.15422 / KT0803) (Gramella forsetii).